Consider the following 291-residue polypeptide: Porphobilinogen deaminase (291 aa).

The residue at position 237 (C237) is an S-(dipyrrolylmethanemethyl)cysteine.

The protein belongs to the HMBS family. As to quaternary structure, monomer. The cofactor is dipyrromethane.

The catalysed reaction is 4 porphobilinogen + H2O = hydroxymethylbilane + 4 NH4(+). It functions in the pathway porphyrin-containing compound metabolism; protoporphyrin-IX biosynthesis; coproporphyrinogen-III from 5-aminolevulinate: step 2/4. Its function is as follows. Tetrapolymerization of the monopyrrole PBG into the hydroxymethylbilane pre-uroporphyrinogen in several discrete steps. The sequence is that of Porphobilinogen deaminase from Clostridium acetobutylicum (strain ATCC 824 / DSM 792 / JCM 1419 / IAM 19013 / LMG 5710 / NBRC 13948 / NRRL B-527 / VKM B-1787 / 2291 / W).